A 494-amino-acid chain; its full sequence is Cytochrome P450 2A6 (494 aa).

Substrate is bound by residues F107 and N297. A heme-binding site is contributed by C439.

Belongs to the cytochrome P450 family. Heme is required as a cofactor. In terms of tissue distribution, liver.

It localises to the endoplasmic reticulum membrane. Its subcellular location is the microsome membrane. The catalysed reaction is 1,4-cineole + reduced [NADPH--hemoprotein reductase] + O2 = 2-exo-hydroxy-1,4-cineole + oxidized [NADPH--hemoprotein reductase] + H2O + H(+). In terms of biological role, exhibits a high coumarin 7-hydroxylase activity. Can act in the hydroxylation of the anti-cancer drugs cyclophosphamide and ifosphamide. Competent in the metabolic activation of aflatoxin B1. Constitutes the major nicotine C-oxidase. Acts as a 1,4-cineole 2-exo-monooxygenase. Possesses low phenacetin O-deethylation activity. This chain is Cytochrome P450 2A6 (CYP2A6), found in Homo sapiens (Human).